A 77-amino-acid chain; its full sequence is Large ribosomal subunit protein bL28 (77 aa).

The protein belongs to the bacterial ribosomal protein bL28 family.

The chain is Large ribosomal subunit protein bL28 from Karelsulcia muelleri (strain GWSS) (Sulcia muelleri).